A 171-amino-acid polypeptide reads, in one-letter code: KRAB domain-containing protein 4 (171 aa).

Residues 8–79 (LTFKDVFVDF…DGGTPVRTCA (72 aa)) enclose the KRAB domain.

As to expression, expressed in brain, ovary, testis, prostate, tonsil, heart, bone marrow, colon, breast and kidney.

This Homo sapiens (Human) protein is KRAB domain-containing protein 4 (KRBOX4).